The chain runs to 128 residues: Aspartate 1-decarboxylase (128 aa).

Residue Ser-25 is the Schiff-base intermediate with substrate; via pyruvic acid of the active site. Pyruvic acid (Ser) is present on Ser-25. Residue Thr-57 participates in substrate binding. Tyr-58 acts as the Proton donor in catalysis. Substrate is bound at residue 73 to 75 (GSA).

Belongs to the PanD family. Heterooctamer of four alpha and four beta subunits. Requires pyruvate as cofactor. In terms of processing, is synthesized initially as an inactive proenzyme, which is activated by self-cleavage at a specific serine bond to produce a beta-subunit with a hydroxyl group at its C-terminus and an alpha-subunit with a pyruvoyl group at its N-terminus.

The protein resides in the cytoplasm. It carries out the reaction L-aspartate + H(+) = beta-alanine + CO2. The protein operates within cofactor biosynthesis; (R)-pantothenate biosynthesis; beta-alanine from L-aspartate: step 1/1. Its function is as follows. Catalyzes the pyruvoyl-dependent decarboxylation of aspartate to produce beta-alanine. The protein is Aspartate 1-decarboxylase of Burkholderia multivorans (strain ATCC 17616 / 249).